A 208-amino-acid polypeptide reads, in one-letter code: ATP phosphoribosyltransferase (208 aa).

Belongs to the ATP phosphoribosyltransferase family. Short subfamily. Heteromultimer composed of HisG and HisZ subunits.

The protein resides in the cytoplasm. It catalyses the reaction 1-(5-phospho-beta-D-ribosyl)-ATP + diphosphate = 5-phospho-alpha-D-ribose 1-diphosphate + ATP. It functions in the pathway amino-acid biosynthesis; L-histidine biosynthesis; L-histidine from 5-phospho-alpha-D-ribose 1-diphosphate: step 1/9. Its function is as follows. Catalyzes the condensation of ATP and 5-phosphoribose 1-diphosphate to form N'-(5'-phosphoribosyl)-ATP (PR-ATP). Has a crucial role in the pathway because the rate of histidine biosynthesis seems to be controlled primarily by regulation of HisG enzymatic activity. The sequence is that of ATP phosphoribosyltransferase from Thermotoga neapolitana (strain ATCC 49049 / DSM 4359 / NBRC 107923 / NS-E).